The sequence spans 150 residues: UPF0178 protein Sbal_1771 (150 aa).

The protein belongs to the UPF0178 family.

This is UPF0178 protein Sbal_1771 from Shewanella baltica (strain OS155 / ATCC BAA-1091).